The chain runs to 284 residues: Tropomyosin (284 aa).

Residues 1-284 are a coiled coil; sequence MDAIKKKMQA…DQTFQELFGY (284 aa). Residues 113–142 show a composition bias toward basic and acidic residues; it reads LEKATHTADESDRVRKVMENRSFQDEERAN. A disordered region spans residues 113-143; the sequence is LEKATHTADESDRVRKVMENRSFQDEERANT.

The protein belongs to the tropomyosin family.

Functionally, tropomyosin, in association with the troponin complex, plays a central role in the calcium dependent regulation of muscle contraction. This Acanthocheilonema viteae (Filarial nematode worm) protein is Tropomyosin.